The primary structure comprises 298 residues: Homoserine kinase (298 aa).

ATP is bound at residue 83-93 (PISRGLGSSSS).

The protein belongs to the GHMP kinase family. Homoserine kinase subfamily.

It is found in the cytoplasm. The enzyme catalyses L-homoserine + ATP = O-phospho-L-homoserine + ADP + H(+). It participates in amino-acid biosynthesis; L-threonine biosynthesis; L-threonine from L-aspartate: step 4/5. Functionally, catalyzes the ATP-dependent phosphorylation of L-homoserine to L-homoserine phosphate. In Clostridium botulinum (strain Alaska E43 / Type E3), this protein is Homoserine kinase.